A 113-amino-acid polypeptide reads, in one-letter code: Translation initiation factor 1A (113 aa).

An S1-like domain is found at 12 to 87; it reads EVIRVPLPEG…KRGDIVYRYT (76 aa).

Belongs to the eIF-1A family.

Seems to be required for maximal rate of protein biosynthesis. Enhances ribosome dissociation into subunits and stabilizes the binding of the initiator Met-tRNA(I) to 40 S ribosomal subunits. In Pyrococcus abyssi (strain GE5 / Orsay), this protein is Translation initiation factor 1A (eIF1A).